The chain runs to 165 residues: Protein FAM219A (165 aa).

Met1 carries the post-translational modification N-acetylmethionine. The interval 1-114 (MMEEIDRFQV…SRYSSSGYSS (114 aa)) is disordered. The span at 32–44 (CDAREEKQRELAR) shows a compositional bias: basic and acidic residues. A compositionally biased stretch (polar residues) spans 49 to 63 (KNGSMGSPVNQQPKK). 2 positions are modified to phosphoserine: Ser55 and Ser85. The residue at position 96 (Thr96) is a Phosphothreonine. A phosphoserine mark is found at Ser98 and Ser105. The span at 105 to 114 (SRYSSSGYSS) shows a compositional bias: low complexity.

This sequence belongs to the FAM219 family.

The chain is Protein FAM219A (FAM219A) from Macaca fascicularis (Crab-eating macaque).